A 273-amino-acid polypeptide reads, in one-letter code: Peptidyl-prolyl cis-trans isomerase E (273 aa).

The RRM domain maps to 1–48 (MPMDYQTEKHRGFAFVEFEEVEDAMSAIDNMNESEIFGRTIRVNVARP). Positions 77–103 (RKLDEPDIVNPSDTSENVEDLSDEEMR) are disordered. In terms of domain architecture, PPIase cyclophilin-type spans 115–271 (FFDIRIGNGD…EPVIISRCGE (157 aa)).

This sequence belongs to the cyclophilin-type PPIase family. PPIase E subfamily.

The protein localises to the cytoplasm. It carries out the reaction [protein]-peptidylproline (omega=180) = [protein]-peptidylproline (omega=0). With respect to regulation, binds cyclosporin A (CsA). CsA mediates some of its effects via an inhibitory action on PPIase. In terms of biological role, PPIases accelerate the folding of proteins. It catalyzes the cis-trans isomerization of proline imidic peptide bonds in oligopeptides. The sequence is that of Peptidyl-prolyl cis-trans isomerase E from Schistosoma mansoni (Blood fluke).